The following is a 263-amino-acid chain: Adaptin ear-binding coat-associated protein 2 (263 aa).

Disordered regions lie at residues 167–191 (KKEG…LPPP) and 209–263 (GGSL…WVQF). Ser-181 carries the phosphoserine modification. 2 short sequence motifs (WXXF motif) span residues 218–221 (GSGG) and 238–241 (DIWG). Positions 246-263 (STGSPSSQSQPGTGWVQF) are enriched in low complexity.

It belongs to the NECAP family. Interacts with AP1G1 and AP2A1 components of the adapter protein complexes AP-1 and AP-2. Interacts with the GAE domain proteins GGA1, GGA2 and GGA3. Expressed in brain, heart, kidney, liver and lung (at protein level).

It localises to the cytoplasmic vesicle. The protein localises to the clathrin-coated vesicle membrane. It is found in the cell membrane. In terms of biological role, involved in endocytosis. This chain is Adaptin ear-binding coat-associated protein 2 (Necap2), found in Rattus norvegicus (Rat).